The following is a 309-amino-acid chain: Ribonuclease Z (309 aa).

Zn(2+) is bound by residues H63, H65, D67, H68, H141, D208, and H266. The Proton acceptor role is filled by D67.

The protein belongs to the RNase Z family. In terms of assembly, homodimer. It depends on Zn(2+) as a cofactor.

It carries out the reaction Endonucleolytic cleavage of RNA, removing extra 3' nucleotides from tRNA precursor, generating 3' termini of tRNAs. A 3'-hydroxy group is left at the tRNA terminus and a 5'-phosphoryl group is left at the trailer molecule.. In terms of biological role, zinc phosphodiesterase, which displays some tRNA 3'-processing endonuclease activity. Probably involved in tRNA maturation, by removing a 3'-trailer from precursor tRNA. The polypeptide is Ribonuclease Z (Salinispora arenicola (strain CNS-205)).